The following is a 317-amino-acid chain: Acetyl-coenzyme A carboxylase carboxyl transferase subunit alpha (317 aa).

In terms of domain architecture, CoA carboxyltransferase C-terminal spans 39–293 (RLKKKSISLT…KTSLAQGVAE (255 aa)).

Belongs to the AccA family. In terms of assembly, acetyl-CoA carboxylase is a heterohexamer composed of biotin carboxyl carrier protein (AccB), biotin carboxylase (AccC) and two subunits each of ACCase subunit alpha (AccA) and ACCase subunit beta (AccD).

Its subcellular location is the cytoplasm. It carries out the reaction N(6)-carboxybiotinyl-L-lysyl-[protein] + acetyl-CoA = N(6)-biotinyl-L-lysyl-[protein] + malonyl-CoA. The protein operates within lipid metabolism; malonyl-CoA biosynthesis; malonyl-CoA from acetyl-CoA: step 1/1. Component of the acetyl coenzyme A carboxylase (ACC) complex. First, biotin carboxylase catalyzes the carboxylation of biotin on its carrier protein (BCCP) and then the CO(2) group is transferred by the carboxyltransferase to acetyl-CoA to form malonyl-CoA. In Marinobacter nauticus (strain ATCC 700491 / DSM 11845 / VT8) (Marinobacter aquaeolei), this protein is Acetyl-coenzyme A carboxylase carboxyl transferase subunit alpha.